Reading from the N-terminus, the 1806-residue chain is Focadhesin (1806 aa).

Positions 733-760 (ARPIPKQPEVEDEVKQNEEENEEEEDIS) are disordered.

The protein resides in the cell junction. The protein localises to the focal adhesion. Its subcellular location is the cytoplasm. It localises to the cytosol. In terms of biological role, required for the maintenance of SKIC2 and SKIC3 proteostatic levels in the liver. May be involved in the regulation of RNA degradation by the exosome complex. In Danio rerio (Zebrafish), this protein is Focadhesin (focad).